Reading from the N-terminus, the 733-residue chain is Vinexin (733 aa).

4 disordered regions span residues 1 to 51 (MARI…SNLD), 129 to 165 (TWPGPGSRPSMSPKPPASQHAQNWSATWTKDSKRQDK), 224 to 285 (SARA…NQVP), and 352 to 448 (ETRL…KRKA). The segment covering 32 to 42 (DPNRVHTKEQL) has biased composition (basic and acidic residues). Residues 147–157 (QHAQNWSATWT) are compositionally biased toward polar residues. The SoHo domain occupies 164 to 232 (DKRWVKYEGI…VSARASSAEP (69 aa)). 2 stretches are compositionally biased toward polar residues: residues 245–256 (PGTTETSSGRNW) and 264–277 (RNTFNYNFRPSSSG). Ser412 and Ser459 each carry phosphoserine. SH3 domains lie at 444–503 (KKRK…VLPA) and 518–579 (LEYG…INRE). The tract at residues 444 to 579 (KKRKAARLKF…PASYVQINRE (136 aa)) is binds to vinculin. The tract at residues 584 to 672 (LCDDGPQLPA…INLGPSSPNT (89 aa)) is disordered. Residue Ser594 is modified to Phosphoserine; by MAPK1. The span at 597–613 (PTTTAHLSSHSHPSSIP) shows a compositional bias: low complexity. Phosphoserine occurs at positions 607, 610, and 624. The span at 638–651 (EPRSQTQSLNTPGP) shows a compositional bias: polar residues. The 60-residue stretch at 674–733 (IHWTPYRAMYQYRPQNEDELELREGDRVDVMQQCDDGWFVGVSRRTQKFGTFPGNYVAPV) folds into the SH3 3 domain. Residues 674–733 (IHWTPYRAMYQYRPQNEDELELREGDRVDVMQQCDDGWFVGVSRRTQKFGTFPGNYVAPV) form a binds to SOS region.

Interacts with vinculin by the first two SH3 domains and the proline rich region of vinculin. Binds to SOS (guanine nucleotide exchange factor of RAS and RAC), through its third SH3 domain. The formation of this complex is down-regulated by phosphorylation of SOS. Interacts with SAFB2, INPPL1/SHIP2 and SRCIN1. Interacts with DLG5 through its third SH3 domain. Interacts with SOCS7 and MAPK1/ERK2. Interacts with FASLG. In terms of processing, phosphorylated at Ser-594 by MAPK1/ERK2 during cell spreading.

The protein localises to the cell junction. The protein resides in the focal adhesion. It localises to the cytoplasm. Its subcellular location is the cytoskeleton. In terms of biological role, promotes up-regulation of actin stress fiber formation. The sequence is that of Vinexin (Sorbs3) from Mus musculus (Mouse).